The sequence spans 258 residues: Type III pantothenate kinase (258 aa).

6-13 (DVGNTNTV) is an ATP binding site. Substrate contacts are provided by residues Y100 and 107–110 (GADR). Residue D109 is the Proton acceptor of the active site. Residue D129 participates in K(+) binding. An ATP-binding site is contributed by T132. T184 lines the substrate pocket.

It belongs to the type III pantothenate kinase family. In terms of assembly, homodimer. NH4(+) is required as a cofactor. K(+) serves as cofactor.

Its subcellular location is the cytoplasm. The enzyme catalyses (R)-pantothenate + ATP = (R)-4'-phosphopantothenate + ADP + H(+). It functions in the pathway cofactor biosynthesis; coenzyme A biosynthesis; CoA from (R)-pantothenate: step 1/5. Functionally, catalyzes the phosphorylation of pantothenate (Pan), the first step in CoA biosynthesis. This is Type III pantothenate kinase from Geobacillus sp. (strain WCH70).